A 64-amino-acid polypeptide reads, in one-letter code: Large ribosomal subunit protein uL29 (64 aa).

Belongs to the universal ribosomal protein uL29 family.

The sequence is that of Large ribosomal subunit protein uL29 from Synechococcus elongatus (strain ATCC 33912 / PCC 7942 / FACHB-805) (Anacystis nidulans R2).